A 503-amino-acid polypeptide reads, in one-letter code: Serine/threonine-protein kinase chk-1 (503 aa).

The region spanning 24-286 (YRVVQTLGEG…IEQIQADPWY (263 aa)) is the Protein kinase domain. ATP-binding positions include 30 to 38 (LGEGAFGEV) and Lys54. Asp150 functions as the Proton acceptor in the catalytic mechanism. The disordered stretch occupies residues 320 to 346 (SAKRRHLETPNEKSTLAERQNASFSQP). Residues 331 to 346 (EKSTLAERQNASFSQP) are compositionally biased toward polar residues. A Phosphoserine modification is found at Ser344.

It belongs to the protein kinase superfamily. CAMK Ser/Thr protein kinase family. NIM1 subfamily. As to expression, expressed in the germline.

It localises to the cytoplasm. The protein localises to the nucleus. It is found in the perinuclear region. It catalyses the reaction L-seryl-[protein] + ATP = O-phospho-L-seryl-[protein] + ADP + H(+). It carries out the reaction L-threonyl-[protein] + ATP = O-phospho-L-threonyl-[protein] + ADP + H(+). Serine/threonine-protein kinase which is required for checkpoint-mediated cell cycle arrest and activation of DNA repair in response to the presence of DNA damage or unreplicated DNA. May also negatively regulate cell cycle progression during unperturbed cell cycles. Required for checkpoint mediated cell cycle arrest in response to DNA damage in germline cells. Delays cell-cycle reentry of the Z2 and Z3 primordial germ cells in response to transcription-induced DNA damage as they emerge from cell cycle arrest in L1 larvae. Essential for embryogenesis. The polypeptide is Serine/threonine-protein kinase chk-1 (Caenorhabditis elegans).